Consider the following 262-residue polypeptide: Pyridoxine 5'-phosphate synthase (262 aa).

Residue N6 coordinates 3-amino-2-oxopropyl phosphate. Position 8–9 (8–9) interacts with 1-deoxy-D-xylulose 5-phosphate; the sequence is DH. R17 serves as a coordination point for 3-amino-2-oxopropyl phosphate. H43 (proton acceptor) is an active-site residue. Positions 45 and 50 each coordinate 1-deoxy-D-xylulose 5-phosphate. The Proton acceptor role is filled by E70. T102 lines the 1-deoxy-D-xylulose 5-phosphate pocket. The active-site Proton donor is H215. 3-amino-2-oxopropyl phosphate is bound by residues G216 and 237 to 238; that span reads GH.

The protein belongs to the PNP synthase family. As to quaternary structure, homooctamer; tetramer of dimers.

Its subcellular location is the cytoplasm. The catalysed reaction is 3-amino-2-oxopropyl phosphate + 1-deoxy-D-xylulose 5-phosphate = pyridoxine 5'-phosphate + phosphate + 2 H2O + H(+). It participates in cofactor biosynthesis; pyridoxine 5'-phosphate biosynthesis; pyridoxine 5'-phosphate from D-erythrose 4-phosphate: step 5/5. Its function is as follows. Catalyzes the complicated ring closure reaction between the two acyclic compounds 1-deoxy-D-xylulose-5-phosphate (DXP) and 3-amino-2-oxopropyl phosphate (1-amino-acetone-3-phosphate or AAP) to form pyridoxine 5'-phosphate (PNP) and inorganic phosphate. This is Pyridoxine 5'-phosphate synthase from Helicobacter pylori (strain P12).